The following is a 406-amino-acid chain: MLEELKYLSETPGIGGRIKVKPEDFIVREIIPKSIFKGNCQIYLMKKRNWETIAAIKEIAKRIGIHYSEIGFAGTKDRHAVTYQYISVCRDVRKEVEKLKIRDVELKFVGYGRPLKLGFLLGNFFLIRVRDVKRPELIPKIIEELKIKGGFPNYFGIQRFGEKRSVNHIVGKLLLEGKYEEAAEVFLGYPGNGMEGDEARKRFLETKDVDLALEEFPKFLRYERAMLYRYRETRSWKKAFLVLPRPILRIFIHAFQAYLFNLYLSRRIEEGLPLNEAIPGDIVVQVKRGIPLRTRTYRVTETNVDFVNEKIKRGEAMVSGPIFGYSYRKAHGIPGRLEEEILDENEVNVEMFKKLPKPMREPGGRRELLIKPRKFAYKRKEEEVLFKFFLPKGVYATSVLREITKH.

Residue Asp-77 is the Nucleophile of the active site. The TRUD domain occupies 150 to 371 (GFPNYFGIQR…PGGRRELLIK (222 aa)).

It belongs to the pseudouridine synthase TruD family.

It catalyses the reaction uridine(13) in tRNA = pseudouridine(13) in tRNA. In terms of biological role, could be responsible for synthesis of pseudouridine from uracil-13 in transfer RNAs. The protein is Probable tRNA pseudouridine synthase D of Pyrococcus abyssi (strain GE5 / Orsay).